Reading from the N-terminus, the 702-residue chain is MSRKLIKYLPLLVLASSVLSGCSNNVSSIKIDRFNNISAVNGPGEEDTWASAQKQGVGTANNYVSKVWFTLANGAISEVYYPTIDTADVKEIKFIVTDGKSFVSDETKDTISKVEKFTDKSLGYKLVNTDKKGRYRITKEIFTDVKRNSLIMKAKFEALEGSIHDYKLYLAYDPHIKNQGSYNEGYVIKANNNEMLMAKRDNVYTALSSNIGWKGYSIGYYKVNDIMTDLDENKQMTKHYDSARGNIIEGAEIDLKKNSQFEIVLSFGNSEDEAVKASIETLSENYDSLKSAYIDEWEKYCNSLNNFNGKANSLYYNSMMILKASEDKTNKGAYIASLSIPWGDGQGDDNTGGYHLVWSRDLYHVANAFIAAGDVDSANRSLDYLAKVVKDNGMIPQNTWISGKPYWTGIQLDEQADPIILSYRLRRYDLYDSLVKPLADFIIKMGPKTGQERWEEIGGYSPATMAAEVAGLTCAAYIAEQNKDYESAQKYQEKADNWQKLIDNLTYTEHGPLENGQYYIRIAGLPDPNADFTISIANGGGVYDQKEIVDPSFLELVRLGVKSPDDPKILNTLRVVDSTIKVDTPKGPSWYRYNHDGYGEPSKTELYHGAGKGRLWPLLTGERGMYEIAAGKDATPYLKAMENFANEGGIISEQVWEDTGLPTDSASPLNWAHAEYVVLFPSNIEHKVLDMPDIVYKRYVAK.

Residues 1–21 form the signal peptide; sequence MSRKLIKYLPLLVLASSVLSG. The N-palmitoyl cysteine moiety is linked to residue Cys22. The S-diacylglycerol cysteine moiety is linked to residue Cys22. Trp342 serves as a coordination point for substrate. Catalysis depends on Glu452, which acts as the Proton acceptor. Residue Glu455 is the Proton donor of the active site.

This sequence belongs to the glycosyl hydrolase 15 family.

It localises to the cell membrane. The enzyme catalyses Hydrolysis of terminal (1-&gt;4)-linked alpha-D-glucose residues successively from non-reducing ends of the chains with release of beta-D-glucose.. Its function is as follows. CGA has typical kinetic properties for a glucoamylase, but this bacterial enzyme had higher isomaltose-hydrolyzing activity than other eukaryotic glucoamylases. This is Glucoamylase (cga) from Clostridium sp. (strain G0005).